Consider the following 730-residue polypeptide: Guanylate cyclase soluble subunit alpha-2 (730 aa).

The segment at 1 to 53 (MSRRKISSESFSSLGSDYLETSPEEEGECPLSKLCWNGSRSPPGPPGSRAAAM) is disordered. The Guanylate cyclase domain maps to 519–646 (TMLFSDIVGF…NNVTLASKFE (128 aa)).

Belongs to the adenylyl cyclase class-4/guanylyl cyclase family. In terms of assembly, heterodimer of an alpha and a beta chain.

The protein localises to the cytoplasm. It carries out the reaction GTP = 3',5'-cyclic GMP + diphosphate. Its activity is regulated as follows. Activated by nitric oxide in the presence of magnesium or manganese ions. Its function is as follows. Has guanylyl cyclase on binding to the beta-1 subunit. The sequence is that of Guanylate cyclase soluble subunit alpha-2 (Gucy1a2) from Rattus norvegicus (Rat).